The chain runs to 360 residues: 3-dehydroquinate synthase (360 aa).

NAD(+)-binding positions include 71–76, 105–109, 129–130, lysine 142, and lysine 151; these read DGEAHK, GVVGD, and TT. Residues glutamate 184, histidine 247, and histidine 264 each contribute to the Zn(2+) site.

The protein belongs to the sugar phosphate cyclases superfamily. Dehydroquinate synthase family. Co(2+) serves as cofactor. The cofactor is Zn(2+). Requires NAD(+) as cofactor.

It is found in the cytoplasm. It catalyses the reaction 7-phospho-2-dehydro-3-deoxy-D-arabino-heptonate = 3-dehydroquinate + phosphate. It participates in metabolic intermediate biosynthesis; chorismate biosynthesis; chorismate from D-erythrose 4-phosphate and phosphoenolpyruvate: step 2/7. Functionally, catalyzes the conversion of 3-deoxy-D-arabino-heptulosonate 7-phosphate (DAHP) to dehydroquinate (DHQ). The protein is 3-dehydroquinate synthase of Azoarcus sp. (strain BH72).